The following is a 324-amino-acid chain: Lipoyl synthase (324 aa).

7 residues coordinate [4Fe-4S] cluster: C71, C76, C82, C97, C101, C104, and S311. The region spanning 83–300 (FGHGTATFLI…GDKAREMGFT (218 aa)) is the Radical SAM core domain.

Belongs to the radical SAM superfamily. Lipoyl synthase family. [4Fe-4S] cluster is required as a cofactor.

Its subcellular location is the cytoplasm. It catalyses the reaction [[Fe-S] cluster scaffold protein carrying a second [4Fe-4S](2+) cluster] + N(6)-octanoyl-L-lysyl-[protein] + 2 oxidized [2Fe-2S]-[ferredoxin] + 2 S-adenosyl-L-methionine + 4 H(+) = [[Fe-S] cluster scaffold protein] + N(6)-[(R)-dihydrolipoyl]-L-lysyl-[protein] + 4 Fe(3+) + 2 hydrogen sulfide + 2 5'-deoxyadenosine + 2 L-methionine + 2 reduced [2Fe-2S]-[ferredoxin]. It participates in protein modification; protein lipoylation via endogenous pathway; protein N(6)-(lipoyl)lysine from octanoyl-[acyl-carrier-protein]: step 2/2. Catalyzes the radical-mediated insertion of two sulfur atoms into the C-6 and C-8 positions of the octanoyl moiety bound to the lipoyl domains of lipoate-dependent enzymes, thereby converting the octanoylated domains into lipoylated derivatives. This is Lipoyl synthase from Nitrosococcus oceani (strain ATCC 19707 / BCRC 17464 / JCM 30415 / NCIMB 11848 / C-107).